Here is a 517-residue protein sequence, read N- to C-terminus: Amidophosphoribosyltransferase (517 aa).

Met1 carries the N-acetylmethionine modification. Residues 1–11 (MELEELGIREE) constitute a propeptide that is removed on maturation. The active-site Nucleophile is Cys12. The region spanning 12 to 261 (CGVFGCIASG…PGEIVEISRH (250 aa)) is the Glutamine amidotransferase type-2 domain. Residue Cys280 participates in [4Fe-4S] cluster binding. Ser327, Asp389, and Asp390 together coordinate Mg(2+). Residues Cys426, Cys503, and Cys506 each contribute to the [4Fe-4S] cluster site.

This sequence in the C-terminal section; belongs to the purine/pyrimidine phosphoribosyltransferase family. As to quaternary structure, homotetramer. The cofactor is Mg(2+). [4Fe-4S] cluster is required as a cofactor.

It catalyses the reaction 5-phospho-beta-D-ribosylamine + L-glutamate + diphosphate = 5-phospho-alpha-D-ribose 1-diphosphate + L-glutamine + H2O. It functions in the pathway purine metabolism; IMP biosynthesis via de novo pathway; N(1)-(5-phospho-D-ribosyl)glycinamide from 5-phospho-alpha-D-ribose 1-diphosphate: step 1/2. Functionally, catalyzes the formation of phosphoribosylamine from phosphoribosylpyrophosphate (PRPP) and glutamine. The protein is Amidophosphoribosyltransferase of Mus musculus (Mouse).